The sequence spans 587 residues: Arginine--tRNA ligase (587 aa).

The short motif at 127–137 is the 'HIGH' region element; it reads PNLAKEMHVGH.

This sequence belongs to the class-I aminoacyl-tRNA synthetase family. Monomer.

Its subcellular location is the cytoplasm. It catalyses the reaction tRNA(Arg) + L-arginine + ATP = L-arginyl-tRNA(Arg) + AMP + diphosphate. This chain is Arginine--tRNA ligase, found in Pseudomonas aeruginosa (strain LESB58).